Here is a 360-residue protein sequence, read N- to C-terminus: Phenylalanine--tRNA ligase alpha subunit (360 aa).

Mg(2+) is bound at residue E264.

This sequence belongs to the class-II aminoacyl-tRNA synthetase family. Phe-tRNA synthetase alpha subunit type 1 subfamily. As to quaternary structure, tetramer of two alpha and two beta subunits. Mg(2+) is required as a cofactor.

The protein localises to the cytoplasm. The catalysed reaction is tRNA(Phe) + L-phenylalanine + ATP = L-phenylalanyl-tRNA(Phe) + AMP + diphosphate + H(+). The polypeptide is Phenylalanine--tRNA ligase alpha subunit (Streptomyces avermitilis (strain ATCC 31267 / DSM 46492 / JCM 5070 / NBRC 14893 / NCIMB 12804 / NRRL 8165 / MA-4680)).